Consider the following 347-residue polypeptide: Oocyte-specific homeobox protein 6 (347 aa).

Disordered stretches follow at residues M1–F20 and P54–Q86. The span at Q72–M85 shows a compositional bias: polar residues. Positions H145 to S204 form a DNA-binding region, homeobox.

It belongs to the paired homeobox family. Obox subfamily. Specifically expressed in early embryos.

The protein localises to the nucleus. Its function is as follows. Transcription factor required for zygotic genome activation (ZGA), a critical event in early embryonic development during which the developmental control passes from maternally provided mRNAs to the expression of the zygotic genome after fertilization. This Mus musculus (Mouse) protein is Oocyte-specific homeobox protein 6.